A 462-amino-acid chain; its full sequence is MARQLSVILVALTLTTALAENFPTRTSAPSDCPQADQGCWCHKNFAQCWSTYDDSRLTEEIGSRITRLELLYQPNEEVVTYIRRMSALREIRISEDGMSLDCSCDLVDAMDDKGITLVNQDELEIRNCRQQGWSRDTMTARPFLIECRRFRIQDDDRRKRRDAEQDSDDVTKRASPRKGDKPAGHKLKDLAPKDTHHLVSIDDVEKHPATDFFNFISGHRRTRRSTGTNEEVSDDSGRSARKKRYGNMNYPQPMNQPMGGGNYPGQPPQQNYAPQGMGGPVGGGGMGGAVGAGAMGGPVGGGGGGMGGPVGGANGIGESVEDEMSVDSDYSSLGGETTISAKVIQDIKNLLGATKIDLPVDINDPYYLGLLLRHLRHHSNLLANIGDPEVREQVLSAMQEEEEEEENDAANGVRENVLNNLNAPGQGGYGGTQGGMRGGAGGGMMGNQGMGGQGYNQGYMQG.

Positions 1-19 (MARQLSVILVALTLTTALA) are cleaved as a signal peptide. Positions 20-244 (ENFPTRTSAP…DSGRSARKKR (225 aa)) are excised as a propeptide. Disordered stretches follow at residues 155–194 (DDRR…APKD) and 221–278 (RTRR…QGMG). The interval 372–380 (LRHLRHHSN) is fucose-binding domain.

Belongs to the bindin family.

The protein resides in the cytoplasmic vesicle. It is found in the secretory vesicle. The protein localises to the acrosome lumen. Functionally, species-specific sea urchin sperm protein required for adhesion of sperm to the egg surface during fertilization. Bindin coats the acrosomal process after it is externalized by the acrosome reaction. It binds to sulfated, fucose-containing polysaccharides on the vitelline layer receptor proteoglycans which cover the egg plasma membrane. The protein is Bindin of Lytechinus variegatus (Green sea urchin).